A 451-amino-acid polypeptide reads, in one-letter code: Tubulin alpha-1 chain (451 aa).

Gln-11 contacts GTP. Residue Lys-40 is modified to N6-acetyllysine. Residues Glu-71, Gly-144, Thr-145, Thr-179, Asn-206, and Asn-228 each coordinate GTP. Glu-71 lines the Mg(2+) pocket. Residue Glu-254 is part of the active site.

It belongs to the tubulin family. Dimer of alpha and beta chains. A typical microtubule is a hollow water-filled tube with an outer diameter of 25 nm and an inner diameter of 15 nM. Alpha-beta heterodimers associate head-to-tail to form protofilaments running lengthwise along the microtubule wall with the beta-tubulin subunit facing the microtubule plus end conferring a structural polarity. Microtubules usually have 13 protofilaments but different protofilament numbers can be found in some organisms and specialized cells. Mg(2+) is required as a cofactor. Undergoes a tyrosination/detyrosination cycle, the cyclic removal and re-addition of a C-terminal tyrosine residue by the enzymes tubulin tyrosine carboxypeptidase (TTCP) and tubulin tyrosine ligase (TTL), respectively. In terms of processing, acetylation of alpha chains at Lys-40 stabilizes microtubules and affects affinity and processivity of microtubule motors. This modification has a role in multiple cellular functions, ranging from cell motility, cell cycle progression or cell differentiation to intracellular trafficking and signaling.

It is found in the cytoplasm. Its subcellular location is the cytoskeleton. It catalyses the reaction GTP + H2O = GDP + phosphate + H(+). Tubulin is the major constituent of microtubules, a cylinder consisting of laterally associated linear protofilaments composed of alpha- and beta-tubulin heterodimers. Microtubules grow by the addition of GTP-tubulin dimers to the microtubule end, where a stabilizing cap forms. Below the cap, tubulin dimers are in GDP-bound state, owing to GTPase activity of alpha-tubulin. The polypeptide is Tubulin alpha-1 chain (TUBA1) (Chlamydomonas reinhardtii (Chlamydomonas smithii)).